A 627-amino-acid polypeptide reads, in one-letter code: MEAHLADMESSGGPTSSLAGTSRNTHVEDDDVVFIESVQPPICAPAIPNERNFVFASSKHENPPGTDSTISPSWRDLTSQKGNLCETIVIDDEGDTDTNGGEEKNPTDFIEWGPNGNKSSTKNVDFPIASLSRSKTKTAVGPFNPGRIDVTDAFQNGRFAVHHNPDSWISQSASFPRNQKQQGVDSLSPVASLPKQIFQPSNQQPTKPVKVTCANCKKPLQKGQTAYQRKGSAHLFCSTTCLSSFSHKRTRKTRNVMCKKDSPVRTTTIVPPVESSKSLQGFYNASLSPYENCQSLRKEVFTKSRCIICNKLGEVRHEISVNSITHKLCSNNCFNEYRLTNGLIMNCCEQCSKYMPKSTGHSILITGQQKRFCCQNCADEYKEIMEAKSKLLLLQNRKRNAIREENEKRLRESSGTLSGNTGDIPEKKEKSSEIIKVAADCSLDTSSEEQNVNLPCSVAVISDTFKEQLGDKNSEELDMSILPSLDPGSWPRILNMKQREFLVKNNPPQIRNFNFPKDSAGKKFSETYYTRILPNGEKGTRPWLLYSASKDSVFCLYCRLFGEGKNQLRNENGCKDWHHLSHLLSKHDESEMHINNSVKYSKLKSDLENKTNEATEGGEDCVQLLYT.

The interval 1 to 23 is disordered; it reads MEAHLADMESSGGPTSSLAGTSR. Positions 12–23 are enriched in polar residues; sequence GGPTSSLAGTSR. K59 participates in a covalent cross-link: Glycyl lysine isopeptide (Lys-Gly) (interchain with G-Cter in SUMO2). Positions 91–123 are disordered; that stretch reads DDEGDTDTNGGEEKNPTDFIEWGPNGNKSSTKN. Glycyl lysine isopeptide (Lys-Gly) (interchain with G-Cter in SUMO2) cross-links involve residues K137 and K195. The MYM-type 1 zinc finger occupies 234–268; it reads HLFCSTTCLSSFSHKRTRKTRNVMCKKDSPVRTTT. The MYM-type 2; degenerate zinc finger occupies 280–319; that stretch reads QGFYNASLSPYENCQSLRKEVFTKSRCIICNKLGEVRHEI. 2 MYM-type zinc fingers span residues 326–354 and 370–396; these read HKLCSNNCFNEYRLTNGLIMNCCEQCSKY and KRFCCQNCADEYKEIMEAKSKLLLLQN. The interval 405 to 429 is disordered; sequence ENEKRLRESSGTLSGNTGDIPEKKE. Residues K408, K427, and K517 each participate in a glycyl lysine isopeptide (Lys-Gly) (interchain with G-Cter in SUMO2) cross-link.

Interacts (via N-terminal 120 amino acid region) with ETV5 (via C-terminal).

The protein localises to the nucleus. Functions as a transcriptional regulator. The protein is Zinc finger MYM-type protein 5 (Zmym5) of Mus musculus (Mouse).